Consider the following 341-residue polypeptide: S-adenosylmethionine:tRNA ribosyltransferase-isomerase (341 aa).

This sequence belongs to the QueA family. In terms of assembly, monomer.

It is found in the cytoplasm. It catalyses the reaction 7-aminomethyl-7-carbaguanosine(34) in tRNA + S-adenosyl-L-methionine = epoxyqueuosine(34) in tRNA + adenine + L-methionine + 2 H(+). The protein operates within tRNA modification; tRNA-queuosine biosynthesis. In terms of biological role, transfers and isomerizes the ribose moiety from AdoMet to the 7-aminomethyl group of 7-deazaguanine (preQ1-tRNA) to give epoxyqueuosine (oQ-tRNA). The chain is S-adenosylmethionine:tRNA ribosyltransferase-isomerase from Clostridioides difficile (strain 630) (Peptoclostridium difficile).